We begin with the raw amino-acid sequence, 498 residues long: Ammonium transporter 1 member 3 (498 aa).

Helical transmembrane passes span 41-61 (LLFS…LCAG), 76-96 (VLDA…FAFG), 122-142 (FFLF…GSIA), 150-170 (YLIY…HWFW), 194-214 (FAGS…GAFI), 238-258 (LVVL…PGSF), 277-299 (AVGR…TLYG), 307-327 (WNVT…TAGC), 329-349 (VVDP…LIGC), 362-382 (LEAT…TALF), and 414-434 (IVQI…LFYV). The interval 473 to 498 (RAKSAAETARVEPRKSPEQAAAGQFV) is disordered.

Belongs to the ammonia transporter channel (TC 1.A.11.2) family. As to expression, expressed in roots.

Its subcellular location is the membrane. Ammonium transporter probably involved in ammonium uptake from the soil. In Oryza sativa subsp. japonica (Rice), this protein is Ammonium transporter 1 member 3 (AMT1-3).